The primary structure comprises 1131 residues: Inositol hexakisphosphate and diphosphoinositol-pentakisphosphate kinase 2 (1131 aa).

The interval 21–53 (DELLDQSKPENLDNLYEHTEDEEDEEDDEYDSP) is disordered. Positions 25–38 (DQSKPENLDNLYEH) are enriched in basic and acidic residues. Over residues 39-52 (TEDEEDEEDDEYDS) the composition is skewed to acidic residues. A substrate-binding site is contributed by 67-68 (KK). ATP-binding positions include arginine 148, lysine 201, histidine 208, arginine 227, 251–254 (EEFM), and 260–262 (DVK). 227–228 (RK) serves as a coordination point for substrate. Substrate contacts are provided by lysine 262 and arginine 276. Residues serine 278, aspartate 323, and 335–337 (DVN) contribute to the ATP site. 340 to 343 (SFVK) serves as a coordination point for substrate. A polyphosphoinositide-binding domain region spans residues 385–456 (PTTSGTKMEL…VLDIARQLLV (72 aa)). The tract at residues 912 to 951 (KGCEEDKNLPSGFGYRPASQENESSKKHTHANDSDEDLGV) is disordered. The span at 934-951 (ESSKKHTHANDSDEDLGV) shows a compositional bias: basic and acidic residues.

It belongs to the histidine acid phosphatase family. VIP1 subfamily.

It is found in the cytoplasm. Its subcellular location is the cytosol. It carries out the reaction 1D-myo-inositol hexakisphosphate + ATP = 1-diphospho-1D-myo-inositol 2,3,4,5,6-pentakisphosphate + ADP. It catalyses the reaction 5-diphospho-1D-myo-inositol 1,2,3,4,6-pentakisphosphate + ATP + H(+) = 1,5-bis(diphospho)-1D-myo-inositol 2,3,4,6-tetrakisphosphate + ADP. Bifunctional inositol kinase that acts in concert with the IP6K kinases IP6K1, IP6K2 and IP6K3 to synthesize the diphosphate group-containing inositol pyrophosphates diphosphoinositol pentakisphosphate, PP-InsP5, and bis-diphosphoinositol tetrakisphosphate, (PP)2-InsP4. PP-InsP5 and (PP)2-InsP4, also respectively called InsP7 and InsP8, regulate a variety of cellular processes, including apoptosis, vesicle trafficking, cytoskeletal dynamics, exocytosis, insulin signaling and neutrophil activation. Phosphorylates inositol hexakisphosphate (InsP6) at position 1 to produce PP-InsP5 which is in turn phosphorylated by IP6Ks to produce (PP)2-InsP4. Alternatively, phosphorylates PP-InsP5 at position 1, produced by IP6Ks from InsP6, to produce (PP)2-InsP4. This is Inositol hexakisphosphate and diphosphoinositol-pentakisphosphate kinase 2 from Xenopus laevis (African clawed frog).